Reading from the N-terminus, the 225-residue chain is Transcription factor HES-7 (225 aa).

Residues 12-69 form the bHLH domain; that stretch reads GPKMLKPLVEKRRRDRINRSLEELRLLLLERTRDQNLRNPKLEKAEILEFAVGYLRER. The region spanning 92–122 is the Orange domain; that stretch reads YLSGFRECLLRLAAFAHDASPAARSQLFSAL. The segment at 124 to 225 is disordered; it reads GYRRPKPPRP…PPPAFWRPWP (102 aa). 2 stretches are compositionally biased toward pro residues: residues 140–149 and 213–225; these read LPAPRPPLDP and PSLP…RPWP. The WRPW motif signature appears at 221–224; the sequence is WRPW.

Transcription repression requires formation of a complex with a corepressor protein of the Groucho/TLE family.

Its subcellular location is the nucleus. Functionally, transcriptional repressor. Represses transcription from both N box- and E box-containing promoters. May with HES1, cooperatively regulate somite formation in the presomitic mesoderm (PSM). May function as a segmentation clock, which is essential for coordinated somite segmentation. This is Transcription factor HES-7 (Hes7) from Mus musculus (Mouse).